Reading from the N-terminus, the 1588-residue chain is uncharacterized protein (1588 aa).

Residues 486–495 show a composition bias toward basic and acidic residues; sequence RKRLTSKTED. Disordered stretches follow at residues 486 to 515 and 1146 to 1176; these read RKRLTSKTEDDQNQWTRDCQNSGEDKKRRP and GGQDNVSDQSENQSENQSLESETSPIVRELN. The span at 498–507 shows a compositional bias: polar residues; the sequence is NQWTRDCQNS. The segment covering 1150–1169 has biased composition (low complexity); the sequence is NVSDQSENQSENQSLESETS.

The protein localises to the virion. This is an uncharacterized protein from Acanthamoeba polyphaga (Amoeba).